The chain runs to 236 residues: DNA repair protein RecO (236 aa).

The protein belongs to the RecO family.

Functionally, involved in DNA repair and RecF pathway recombination. The polypeptide is DNA repair protein RecO (Haemophilus influenzae (strain 86-028NP)).